Reading from the N-terminus, the 382-residue chain is Mannitol-1-phosphate 5-dehydrogenase (382 aa).

4–15 contributes to the NAD(+) binding site; it reads AVHFGAGNIGRG.

The protein belongs to the mannitol dehydrogenase family.

The catalysed reaction is D-mannitol 1-phosphate + NAD(+) = beta-D-fructose 6-phosphate + NADH + H(+). The polypeptide is Mannitol-1-phosphate 5-dehydrogenase (Vibrio vulnificus (strain CMCP6)).